The sequence spans 455 residues: Bifunctional protein GlmU (455 aa).

The pyrophosphorylase stretch occupies residues 1–226; that stretch reads MIAVAILAAG…YQEILGINDR (226 aa). UDP-N-acetyl-alpha-D-glucosamine contacts are provided by residues 7-10, lysine 21, glutamine 73, and 78-79; these read LAAG and GT. Aspartate 103 contributes to the Mg(2+) binding site. Glycine 140, glutamate 155, asparagine 170, and asparagine 224 together coordinate UDP-N-acetyl-alpha-D-glucosamine. Asparagine 224 provides a ligand contact to Mg(2+). The tract at residues 227 to 247 is linker; sequence KQLATAYKILQDRIKDDWLVA. The tract at residues 248 to 455 is N-acetyltransferase; the sequence is GVTIMDPDSI…RPISSKQTEK (208 aa). UDP-N-acetyl-alpha-D-glucosamine-binding residues include arginine 329 and lysine 347. Histidine 359 serves as the catalytic Proton acceptor. Positions 362 and 373 each coordinate UDP-N-acetyl-alpha-D-glucosamine. Residues alanine 376, 382–383, alanine 419, and arginine 436 each bind acetyl-CoA; that span reads NY.

The protein in the N-terminal section; belongs to the N-acetylglucosamine-1-phosphate uridyltransferase family. This sequence in the C-terminal section; belongs to the transferase hexapeptide repeat family. In terms of assembly, homotrimer. It depends on Mg(2+) as a cofactor.

It localises to the cytoplasm. The catalysed reaction is alpha-D-glucosamine 1-phosphate + acetyl-CoA = N-acetyl-alpha-D-glucosamine 1-phosphate + CoA + H(+). The enzyme catalyses N-acetyl-alpha-D-glucosamine 1-phosphate + UTP + H(+) = UDP-N-acetyl-alpha-D-glucosamine + diphosphate. Its pathway is nucleotide-sugar biosynthesis; UDP-N-acetyl-alpha-D-glucosamine biosynthesis; N-acetyl-alpha-D-glucosamine 1-phosphate from alpha-D-glucosamine 6-phosphate (route II): step 2/2. It participates in nucleotide-sugar biosynthesis; UDP-N-acetyl-alpha-D-glucosamine biosynthesis; UDP-N-acetyl-alpha-D-glucosamine from N-acetyl-alpha-D-glucosamine 1-phosphate: step 1/1. It functions in the pathway bacterial outer membrane biogenesis; LPS lipid A biosynthesis. Functionally, catalyzes the last two sequential reactions in the de novo biosynthetic pathway for UDP-N-acetylglucosamine (UDP-GlcNAc). The C-terminal domain catalyzes the transfer of acetyl group from acetyl coenzyme A to glucosamine-1-phosphate (GlcN-1-P) to produce N-acetylglucosamine-1-phosphate (GlcNAc-1-P), which is converted into UDP-GlcNAc by the transfer of uridine 5-monophosphate (from uridine 5-triphosphate), a reaction catalyzed by the N-terminal domain. This Acaryochloris marina (strain MBIC 11017) protein is Bifunctional protein GlmU.